Reading from the N-terminus, the 165-residue chain is Transcription antitermination protein NusB (165 aa).

Positions 1–27 (MISDDTDQFNPRDAKSPEAAKGKSAKR) are disordered. Positions 10–21 (NPRDAKSPEAAK) are enriched in basic and acidic residues.

The protein belongs to the NusB family.

Its function is as follows. Involved in transcription antitermination. Required for transcription of ribosomal RNA (rRNA) genes. Binds specifically to the boxA antiterminator sequence of the ribosomal RNA (rrn) operons. The protein is Transcription antitermination protein NusB of Pseudomonas savastanoi pv. phaseolicola (strain 1448A / Race 6) (Pseudomonas syringae pv. phaseolicola (strain 1448A / Race 6)).